The chain runs to 554 residues: Hydroxylamine reductase (554 aa).

[2Fe-2S] cluster contacts are provided by C3, C6, C18, and C25. Hybrid [4Fe-2O-2S] cluster is bound by residues H252, E276, C320, C408, C436, C461, E495, and K497. C408 is modified (cysteine persulfide).

This sequence belongs to the HCP family. The cofactor is [2Fe-2S] cluster. Hybrid [4Fe-2O-2S] cluster serves as cofactor.

Its subcellular location is the cytoplasm. The enzyme catalyses A + NH4(+) + H2O = hydroxylamine + AH2 + H(+). In terms of biological role, catalyzes the reduction of hydroxylamine to form NH(3) and H(2)O. The sequence is that of Hydroxylamine reductase from Shewanella putrefaciens (strain CN-32 / ATCC BAA-453).